We begin with the raw amino-acid sequence, 417 residues long: Calreticulin (417 aa).

Residues 1–17 form the signal peptide; it reads MLLPVPLLLGLLGLAAA. Residues 18–197 form an N-domain region; it reads DPTVYFKEQF…NSQVESGSLE (180 aa). Q26 contacts Ca(2+). At K48 the chain carries N6-acetyllysine. The Ca(2+) site is built by K62 and K64. Position 64 is an N6-(2-hydroxyisobutyryl)lysine (K64). 4 residues coordinate an alpha-D-glucoside: Y109, K111, Y128, and D135. C137 and C163 are oxidised to a cystine. Position 159 is an N6-acetyllysine (K159). N179 carries an N-linked (GlcNAc...) asparagine glycan. Residues 191 to 202 form a 1-1 repeat; that stretch reads VESGSLEDDWDF. Positions 191–255 are 4 X approximate repeats; it reads VESGSLEDDW…DAKKPEDWDE (65 aa). The disordered stretch occupies residues 193-270; the sequence is SGSLEDDWDF…WEPPVIQNPE (78 aa). Positions 198 to 308 are P-domain; it reads DDWDFLPPKK…YSPDSNIYAY (111 aa). Residues 207-251 show a composition bias toward basic and acidic residues; sequence KIKDPDAAKPEDWDDRAKIDDPTDSKPEDWDKPEHIPDPDAKKPE. K209 carries the N6-acetyllysine modification. Tandem repeats lie at residues 210-221, 227-238, 244-255, 259-269, 273-283, and 287-297. Residues 237 to 270 are interaction with PPIB; that stretch reads DKPEHIPDPDAKKPEDWDEEMDGEWEPPVIQNPE. A compositionally biased stretch (acidic residues) spans 252–261; that stretch reads DWDEEMDGEW. The segment at 259-297 is 3 X approximate repeats; that stretch reads GEWEPPVIQNPEYKGEWKPRQIDNPEYKGIWIHPEIDNP. Positions 309–417 are C-domain; it reads ENFAVLGLDL…AAAGQAKDEL (109 aa). D317 contacts an alpha-D-glucoside. D328 is a binding site for Ca(2+). Residues 350–417 are disordered; the sequence is TKAAEKQMKD…AAAGQAKDEL (68 aa). The segment covering 352–378 has biased composition (basic and acidic residues); that stretch reads AAEKQMKDKQDEEQRLHEEEEEKKGKE. Over residues 379–408 the composition is skewed to acidic residues; the sequence is EEEADKDDDEDKDEDEEDEDEKEEEEEEDA. A Prevents secretion from ER motif is present at residues 414 to 417; it reads KDEL.

Belongs to the calreticulin family. As to quaternary structure, monomer. Component of an EIF2 complex at least composed of CELF1/CUGBP1, CALR, CALR3, EIF2S1, EIF2S2, HSP90B1 and HSPA5. Interacts with PDIA3/ERp57 and SPACA9. Interacts with TRIM21. Interacts with NR3C1. Interacts with PPIB. Interacts (via P-domain) with PDIA5. Interacts with GABARAP. Interacts with CLCC1.

Its subcellular location is the endoplasmic reticulum lumen. It is found in the cytoplasm. The protein localises to the cytosol. The protein resides in the secreted. It localises to the extracellular space. Its subcellular location is the extracellular matrix. It is found in the cell surface. The protein localises to the sarcoplasmic reticulum lumen. The protein resides in the cytoplasmic vesicle. It localises to the secretory vesicle. Its subcellular location is the cortical granule. It is found in the cytolytic granule. Its function is as follows. Calcium-binding chaperone that promotes folding, oligomeric assembly and quality control in the endoplasmic reticulum (ER) via the calreticulin/calnexin cycle. This lectin interacts transiently with almost all of the monoglucosylated glycoproteins that are synthesized in the ER. Interacts with the DNA-binding domain of NR3C1 and mediates its nuclear export. Involved in maternal gene expression regulation. May participate in oocyte maturation via the regulation of calcium homeostasis. Present in the cortical granules of non-activated oocytes, is exocytosed during the cortical reaction in response to oocyte activation and might participate in the block to polyspermy. In Bos taurus (Bovine), this protein is Calreticulin (CALR).